The primary structure comprises 588 residues: Probable metalloprotease ARX1 (588 aa).

This sequence belongs to the peptidase M24 family. As to quaternary structure, component of the nucleoplasmic and cytoplasmic pre-60S ribosomal particles.

It is found in the cytoplasm. The protein localises to the nucleus. In terms of biological role, probable metalloprotease involved in proper assembly of pre-ribosomal particles during the biogenesis of the 60S ribosomal subunit. Accompanies the pre-60S particles to the cytoplasm. In Candida glabrata (strain ATCC 2001 / BCRC 20586 / JCM 3761 / NBRC 0622 / NRRL Y-65 / CBS 138) (Yeast), this protein is Probable metalloprotease ARX1 (ARX1).